We begin with the raw amino-acid sequence, 115 residues long: Large ribosomal subunit protein bL20 (115 aa).

Belongs to the bacterial ribosomal protein bL20 family.

Its function is as follows. Binds directly to 23S ribosomal RNA and is necessary for the in vitro assembly process of the 50S ribosomal subunit. It is not involved in the protein synthesizing functions of that subunit. The polypeptide is Large ribosomal subunit protein bL20 (Synechococcus sp. (strain WH7803)).